A 340-amino-acid chain; its full sequence is DNA-directed RNA polymerase subunit alpha (340 aa).

The segment at 1-238 (MVDPIVTKNW…EQLSIFINFD (238 aa)) is alpha N-terminal domain (alpha-NTD). The tract at residues 255–340 (LNENLFRSVD…AAPQGGAPKV (86 aa)) is alpha C-terminal domain (alpha-CTD).

It belongs to the RNA polymerase alpha chain family. In terms of assembly, homodimer. The RNAP catalytic core consists of 2 alpha, 1 beta, 1 beta' and 1 omega subunit. When a sigma factor is associated with the core the holoenzyme is formed, which can initiate transcription.

It carries out the reaction RNA(n) + a ribonucleoside 5'-triphosphate = RNA(n+1) + diphosphate. DNA-dependent RNA polymerase catalyzes the transcription of DNA into RNA using the four ribonucleoside triphosphates as substrates. The polypeptide is DNA-directed RNA polymerase subunit alpha (Anaeromyxobacter dehalogenans (strain 2CP-1 / ATCC BAA-258)).